A 312-amino-acid chain; its full sequence is RNA pseudouridylate synthase domain-containing protein 1 (312 aa).

Residue Met-1 is modified to N-acetylmethionine. Asp-67 is a catalytic residue. Residues 256 to 298 are disordered; sequence ATPDPDPEDRGPRPGSPSALLPGPGRPPPPPTKPPETEAQRGP. The segment covering 279 to 289 has biased composition (pro residues); that stretch reads PGRPPPPPTKP.

Belongs to the pseudouridine synthase RluA family.

This is RNA pseudouridylate synthase domain-containing protein 1 (RPUSD1) from Homo sapiens (Human).